The sequence spans 226 residues: UPF0758 protein Sca_1264 (226 aa).

The MPN domain occupies 102-224 (KITSPQDAAD…YLSMVEGGYF (123 aa)). Zn(2+) is bound by residues His-173, His-175, and Asp-186. The short motif at 173–186 (HNHPSGDVTPSKED) is the JAMM motif element.

It belongs to the UPF0758 family.

The polypeptide is UPF0758 protein Sca_1264 (Staphylococcus carnosus (strain TM300)).